The sequence spans 279 residues: S-methyl-5'-thioadenosine phosphorylase (279 aa).

Residues S28, 70–71 (RH), and 103–104 (SA) contribute to the phosphate site. M202 is a binding site for substrate. T203 lines the phosphate pocket. 226 to 228 (DYD) is a substrate binding site.

The protein belongs to the PNP/MTAP phosphorylase family. MTAP subfamily. As to quaternary structure, homohexamer. Dimer of a homotrimer.

It catalyses the reaction S-methyl-5'-thioadenosine + phosphate = 5-(methylsulfanyl)-alpha-D-ribose 1-phosphate + adenine. It functions in the pathway amino-acid biosynthesis; L-methionine biosynthesis via salvage pathway; S-methyl-5-thio-alpha-D-ribose 1-phosphate from S-methyl-5'-thioadenosine (phosphorylase route): step 1/1. Its function is as follows. Catalyzes the reversible phosphorylation of S-methyl-5'-thioadenosine (MTA) to adenine and 5-methylthioribose-1-phosphate. Involved in the breakdown of MTA, a major by-product of polyamine biosynthesis. Responsible for the first step in the methionine salvage pathway after MTA has been generated from S-adenosylmethionine. Has broad substrate specificity with 6-aminopurine nucleosides as preferred substrates. The chain is S-methyl-5'-thioadenosine phosphorylase from Pyrobaculum aerophilum (strain ATCC 51768 / DSM 7523 / JCM 9630 / CIP 104966 / NBRC 100827 / IM2).